Reading from the N-terminus, the 140-residue chain is 3-hydroxyacyl-[acyl-carrier-protein] dehydratase FabZ (140 aa).

His-47 is an active-site residue.

The protein belongs to the thioester dehydratase family. FabZ subfamily.

It localises to the cytoplasm. It carries out the reaction a (3R)-hydroxyacyl-[ACP] = a (2E)-enoyl-[ACP] + H2O. Its function is as follows. Involved in unsaturated fatty acids biosynthesis. Catalyzes the dehydration of short chain beta-hydroxyacyl-ACPs and long chain saturated and unsaturated beta-hydroxyacyl-ACPs. The polypeptide is 3-hydroxyacyl-[acyl-carrier-protein] dehydratase FabZ (Streptococcus agalactiae serotype III (strain NEM316)).